Here is a 221-residue protein sequence, read N- to C-terminus: MALPGQQAVDYPSFKLVIVGDGGTGKTTFVKRHLTGEFEKKYEPTIGVEVHPLDFFTNCGKIRFYCWDTAGQEKFGGLRDGYYIHGQCAIIMFDVTARLTYKNVPTWHRDLCRVCENIPIVLCGNKVDVKNRQVKAKQVTFHRKKNLQYYEISAKSNYNFEKPFLYLARKLAGDPNLHFVESPALAPPEVQIDLAAQQQHEAELAAAASQPLPDDDDETFD.

Positions 10–174 constitute a Small GTPase Ran-type domain; sequence DYPSFKLVIV…LYLARKLAGD (165 aa). GTP is bound at residue 21-28; the sequence is DGGTGKTT. The interval 40–48 is switch-I; that stretch reads KKYEPTIGV. GTP is bound by residues G71, 125–128, and 153–155; these read NKVD and SAK. Residues 71–87 form a switch-II region; it reads GQEKFGGLRDGYYIHGQ. The span at 199–208 shows a compositional bias: low complexity; it reads QHEAELAAAA. A disordered region spans residues 199–221; that stretch reads QHEAELAAAASQPLPDDDDETFD.

The protein belongs to the small GTPase superfamily. Ran family. In terms of assembly, found in a nuclear export complex with RanGTP, exportin and pre-miRNA.

The protein resides in the nucleus. GTP-binding protein involved in nucleocytoplasmic transport. Required for the import of protein into the nucleus and also for RNA export. Involved in chromatin condensation and control of cell cycle. The protein is GTP-binding nuclear protein Ran-A1 (RAN-A1) of Nicotiana tabacum (Common tobacco).